Reading from the N-terminus, the 219-residue chain is Response regulator ArlR (219 aa).

The Response regulatory domain maps to 3–116; sequence NILIVEDEQN…ELLARIRAVL (114 aa). A 4-aspartylphosphate modification is found at D52. Residues 122-219 constitute a DNA-binding region (ompR/PhoB-type); the sequence is KDVLDINGII…TVRGVGYVIR (98 aa).

Post-translationally, phosphorylated by ArlS.

It is found in the cytoplasm. Its function is as follows. Member of the two-component regulatory system ArlS/ArlR. This chain is Response regulator ArlR (arlR), found in Staphylococcus epidermidis (strain ATCC 35984 / DSM 28319 / BCRC 17069 / CCUG 31568 / BM 3577 / RP62A).